Here is a 244-residue protein sequence, read N- to C-terminus: Mono-ADP-ribosyltransferase C3 (244 aa).

The first 40 residues, 1 to 40, serve as a signal peptide directing secretion; it reads MKGIRKSILCLVLSAGVIAPVTTSIVQSPQKCYACTVDKG. The TR mART core domain maps to 44-244; that stretch reads DTFTEFTNVE…QIMITAMIFK (201 aa). Residues Thr-80, Asn-87, Arg-91, 128–131, and 167–169 each bind NAD(+); these read RGDD and RTE. Residue Arg-128 is part of the active site. The active site involves Ser-174. Residues 182 to 185 and 211 to 213 each bind NAD(+); these read FGGR and QLE. Glu-213 is a catalytic residue.

The protein to exoenzymes 3 of C.limosum and C.botulinum D phage, and to S.aureus ediN. In terms of assembly, monomer.

The protein localises to the secreted. It catalyses the reaction L-asparaginyl-[protein] + NAD(+) = N(4)-(ADP-D-ribosyl)-L-asparaginyl-[protein] + nicotinamide + H(+). Functionally, ADP-ribosylates eukaryotic Rho and Rac proteins on an asparagine residue. The protein is Mono-ADP-ribosyltransferase C3 of Clostridium botulinum C phage (Clostridium botulinum C bacteriophage).